We begin with the raw amino-acid sequence, 500 residues long: L-arabinose isomerase (500 aa).

Residues Glu306, Glu333, His350, and His450 each coordinate Mn(2+).

This sequence belongs to the arabinose isomerase family. Homohexamer. It depends on Mn(2+) as a cofactor.

The enzyme catalyses beta-L-arabinopyranose = L-ribulose. The protein operates within carbohydrate degradation; L-arabinose degradation via L-ribulose; D-xylulose 5-phosphate from L-arabinose (bacterial route): step 1/3. In terms of biological role, catalyzes the conversion of L-arabinose to L-ribulose. The protein is L-arabinose isomerase of Yersinia pseudotuberculosis serotype O:3 (strain YPIII).